Here is a 447-residue protein sequence, read N- to C-terminus: Phosphoglucosamine mutase (447 aa).

The active-site Phosphoserine intermediate is S88. Mg(2+) is bound by residues S88, D231, D233, and D235. Position 88 is a phosphoserine (S88).

It belongs to the phosphohexose mutase family. Requires Mg(2+) as cofactor. Post-translationally, activated by phosphorylation.

It catalyses the reaction alpha-D-glucosamine 1-phosphate = D-glucosamine 6-phosphate. Functionally, catalyzes the conversion of glucosamine-6-phosphate to glucosamine-1-phosphate. This is Phosphoglucosamine mutase from Methanococcus maripaludis (strain C7 / ATCC BAA-1331).